The sequence spans 517 residues: Retrotransposon-like protein 1 (517 aa).

Disordered stretches follow at residues 1–29 (MEVNEGQDTEGGSSRAQTLTPPPNPQQQL) and 142–161 (EEERDKRKKEEQFREADARS).

This chain is Retrotransposon-like protein 1 (retr-1), found in Caenorhabditis elegans.